Here is a 349-residue protein sequence, read N- to C-terminus: Homoserine O-succinyltransferase (349 aa).

Cysteine 146 functions as the Acyl-thioester intermediate in the catalytic mechanism. Substrate is bound by residues lysine 167 and serine 196. Histidine 239 acts as the Proton acceptor in catalysis. Glutamate 241 is a catalytic residue. Arginine 253 is a binding site for substrate.

It belongs to the MetA family.

It localises to the cytoplasm. The catalysed reaction is L-homoserine + succinyl-CoA = O-succinyl-L-homoserine + CoA. Its pathway is amino-acid biosynthesis; L-methionine biosynthesis via de novo pathway; O-succinyl-L-homoserine from L-homoserine: step 1/1. Transfers a succinyl group from succinyl-CoA to L-homoserine, forming succinyl-L-homoserine. In vitro, can also use glutaryl-CoA as acyl donor. This chain is Homoserine O-succinyltransferase, found in Thiobacillus denitrificans (strain ATCC 25259 / T1).